Here is a 310-residue protein sequence, read N- to C-terminus: 4-hydroxyproline 2-epimerase (310 aa).

The Proton acceptor role is filled by Cys-88. Substrate contacts are provided by residues 89–90, His-208, and Asp-232; that span reads GH. Cys-236 functions as the Proton donor in the catalytic mechanism. Position 237–238 (237–238) interacts with substrate; the sequence is GT.

The protein belongs to the proline racemase family.

It carries out the reaction trans-4-hydroxy-L-proline = cis-4-hydroxy-D-proline. Functionally, catalyzes the epimerization of trans-4-hydroxy-L-proline (t4LHyp) to cis-4-hydroxy-D-proline (c4DHyp). Is likely involved in a degradation pathway that converts t4LHyp to alpha-ketoglutarate. Displays no proline racemase activity. The protein is 4-hydroxyproline 2-epimerase of Acinetobacter baumannii (strain AYE).